Here is a 393-residue protein sequence, read N- to C-terminus: Interferon regulatory factor 9 (393 aa).

A DNA-binding region (IRF tryptophan pentad repeat) is located at residues 9–116 (TRKLRNWVVE…EPYKVYQLLP (108 aa)). 2 disordered regions span residues 120–151 (VSGQ…AMQN) and 163–202 (LNNE…APFQ). A Phosphoserine modification is found at Ser139.

It belongs to the IRF family. Interacts with STAT2 in the cytoplasm. Forms the interferon-stimulated gene factor 3 complex (ISGF3) with the heterodimer STAT1:STAT2; upon stimulation. In terms of assembly, (Microbial infection) Interacts with measles virus V protein; this interaction prevents the binding of IRF9 to STAT2 and thereby the type I interferon signaling pathway. (Microbial infection) Ubiquitinated by Herpes simplex virus 2 E3 ubiquitin ligase ICP22.

The protein localises to the cytoplasm. Its subcellular location is the nucleus. Functionally, transcription factor that plays an essential role in anti-viral immunity. It mediates signaling by type I IFNs (IFN-alpha and IFN-beta). Following type I IFN binding to cell surface receptors, Jak kinases (TYK2 and JAK1) are activated, leading to tyrosine phosphorylation of STAT1 and STAT2. IRF9/ISGF3G associates with the phosphorylated STAT1:STAT2 dimer to form a complex termed ISGF3 transcription factor, that enters the nucleus. ISGF3 binds to the IFN stimulated response element (ISRE) to activate the transcription of interferon stimulated genes, which drive the cell in an antiviral state. The protein is Interferon regulatory factor 9 (IRF9) of Homo sapiens (Human).